A 434-amino-acid polypeptide reads, in one-letter code: Histidine--tRNA ligase (434 aa).

This sequence belongs to the class-II aminoacyl-tRNA synthetase family. In terms of assembly, homodimer.

Its subcellular location is the cytoplasm. The catalysed reaction is tRNA(His) + L-histidine + ATP = L-histidyl-tRNA(His) + AMP + diphosphate + H(+). This chain is Histidine--tRNA ligase, found in Chlorobium phaeobacteroides (strain BS1).